Reading from the N-terminus, the 483-residue chain is Coagulation factor X isoform 1 (483 aa).

Residues 1 to 20 form the signal peptide; the sequence is MAPQLLLCLILTFLWSLPEA. Positions 21-40 are excised as a propeptide; it reads ESNVFLKSKVANRFLQRTKR. The Gla domain occupies 41-86; it reads ANSLFEEFKSGNIERECIEERCSKEEAREAFEDDEKTETFWNVYVD. 11 positions are modified to 4-carboxyglutamate: Glu-46, Glu-47, Glu-54, Glu-56, Glu-59, Glu-60, Glu-65, Glu-66, Glu-69, Glu-72, and Glu-75. Cys-57 and Cys-62 are joined by a disulfide. One can recognise an EGF-like 1; calcium-binding domain in the interval 86–122; sequence DGDQCSSNPCHYGGTCKDGIGSYTCTCLSGYEGKNCE. 11 cysteine pairs are disulfide-bonded: Cys-90–Cys-101, Cys-95–Cys-110, Cys-112–Cys-121, Cys-129–Cys-140, Cys-136–Cys-149, Cys-151–Cys-164, Cys-172–Cys-345, Cys-245–Cys-250, Cys-265–Cys-281, Cys-393–Cys-407, and Cys-418–Cys-446. Ser-92 carries O-linked (Hex...) serine glycosylation. Asp-103 bears the (3R)-3-hydroxyaspartate mark. In terms of domain architecture, EGF-like 2 spans 125 to 165; the sequence is LYKSCRVDNGDCWHFCKPVQNGIQCSCAESYLLGEDGHSCV. Positions 183–238 are cleaved as a propeptide — activation peptide; it reads EANLPDFQTDFSDDYDEIDENNFVETPTNFSGLVLTVQSQNATLLKKSDNPSPDIR. The Peptidase S1 domain occupies 239-470; that stretch reads VVNGTDCKLG…FILWIKRIIR (232 aa). His-280 (charge relay system) is an active-site residue. Asn-283 carries an N-linked (GlcNAc...) asparagine glycan. The active-site Charge relay system is the Asp-325. Ser-422 serves as the catalytic Charge relay system.

It belongs to the peptidase S1 family. Heterodimer of a light chain and a heavy chain; disulfide-linked. Post-translationally, gamma-carboxyglutamate residues are formed by vitamin K dependent carboxylation. These residues are essential for the binding of calcium. In terms of processing, the activation peptide is cleaved by factor IXa (in the intrinsic pathway), or by factor VIIa (in the extrinsic pathway). The iron and 2-oxoglutarate dependent 3-hydroxylation of aspartate and asparagine is (R) stereospecific within EGF domains. As to expression, plasma; synthesized in the liver.

It is found in the secreted. It carries out the reaction Selective cleavage of Arg-|-Thr and then Arg-|-Ile bonds in prothrombin to form thrombin.. Its function is as follows. Factor Xa is a vitamin K-dependent glycoprotein that converts prothrombin to thrombin in the presence of factor Va, calcium and phospholipid during blood clotting. This is Coagulation factor X isoform 1 (F10) from Pseudonaja textilis (Eastern brown snake).